The sequence spans 405 residues: Phosphopentomutase (405 aa).

Positions 10, 305, 310, 346, 347, and 358 each coordinate Mn(2+).

The protein belongs to the phosphopentomutase family. Requires Mn(2+) as cofactor.

It localises to the cytoplasm. The enzyme catalyses 2-deoxy-alpha-D-ribose 1-phosphate = 2-deoxy-D-ribose 5-phosphate. It carries out the reaction alpha-D-ribose 1-phosphate = D-ribose 5-phosphate. It participates in carbohydrate degradation; 2-deoxy-D-ribose 1-phosphate degradation; D-glyceraldehyde 3-phosphate and acetaldehyde from 2-deoxy-alpha-D-ribose 1-phosphate: step 1/2. In terms of biological role, isomerase that catalyzes the conversion of deoxy-ribose 1-phosphate (dRib-1-P) and ribose 1-phosphate (Rib-1-P) to deoxy-ribose 5-phosphate (dRib-5-P) and ribose 5-phosphate (Rib-5-P), respectively. In Methylorubrum extorquens (strain CM4 / NCIMB 13688) (Methylobacterium extorquens), this protein is Phosphopentomutase.